The following is a 103-amino-acid chain: N(4)-acetylcytidine amidohydrolase (103 aa).

The ASCH domain maps to 6–94 (ITFFQRFQND…IAEIYPNQTQ (89 aa)). The active-site Proton acceptor is the Lys-21. Thr-24 acts as the Nucleophile in catalysis. Residue Glu-74 is the Proton donor of the active site.

Belongs to the N(4)-acetylcytidine amidohydrolase family.

It catalyses the reaction N(4)-acetylcytidine + H2O = cytidine + acetate + H(+). It carries out the reaction N(4)-acetyl-2'-deoxycytidine + H2O = 2'-deoxycytidine + acetate + H(+). The catalysed reaction is N(4)-acetylcytosine + H2O = cytosine + acetate + H(+). Functionally, catalyzes the hydrolysis of N(4)-acetylcytidine (ac4C). In Salmonella schwarzengrund (strain CVM19633), this protein is N(4)-acetylcytidine amidohydrolase (yqfB).